The sequence spans 424 residues: Glutamate-1-semialdehyde 2,1-aminomutase (424 aa).

K266 is subject to N6-(pyridoxal phosphate)lysine.

The protein belongs to the class-III pyridoxal-phosphate-dependent aminotransferase family. HemL subfamily. Homodimer. Pyridoxal 5'-phosphate is required as a cofactor.

It is found in the cytoplasm. It catalyses the reaction (S)-4-amino-5-oxopentanoate = 5-aminolevulinate. It functions in the pathway porphyrin-containing compound metabolism; protoporphyrin-IX biosynthesis; 5-aminolevulinate from L-glutamyl-tRNA(Glu): step 2/2. This chain is Glutamate-1-semialdehyde 2,1-aminomutase, found in Thermus thermophilus (strain ATCC 27634 / DSM 579 / HB8).